The following is a 248-amino-acid chain: MRLIQNMCTIAEYPAPGNAAASDCCVGAAGRRLVKIAVVGASGVGKTALVVRFLTKRFIGDYERNAGNLYTRQVQIEGETLALQVQDTPGIQVHENSLSCSEQLNRCIRWADAVVIVFSITDYKSYELISQLHQHVQQLHLGTRLPVVVVANKADLLHIKQVDPQLGLQLASMLGCSFYEVSVSENYNDVYSAFHVLCKEVSHKQQPSSTPEKRRTSLIPRPKSPNMQDLKRRFKQALSAKVRTVTSV.

Residues 29 to 246 form a small GTPase-like region; it reads AGRRLVKIAV…ALSAKVRTVT (218 aa). Residues 40-47, 87-94, and 152-155 contribute to the GTP site; these read GASGVGKT, DTPGIQVH, and NKAD. A disordered region spans residues 205–226; it reads QQPSSTPEKRRTSLIPRPKSPN.

Belongs to the small GTPase superfamily. Ras family. As to expression, widely expressed with highest levels in placenta and primary macrophages.

The enzyme catalyses GTP + H2O = GDP + phosphate + H(+). The sequence is that of Ras-like protein family member 11B from Homo sapiens (Human).